A 575-amino-acid chain; its full sequence is Probable cytochrome P450 514A1 (575 aa).

Residues 4-24 traverse the membrane as a helical segment; that stretch reads IFTIILTITILVLSLILKDLL. Cys-448 lines the heme pocket.

This sequence belongs to the cytochrome P450 family. Heme is required as a cofactor.

Its subcellular location is the membrane. The chain is Probable cytochrome P450 514A1 (cyp514A1) from Dictyostelium discoideum (Social amoeba).